A 294-amino-acid chain; its full sequence is Nucleotide-binding protein Adeh_0147 (294 aa).

Position 17–24 (17–24 (GVSGSGKS)) interacts with ATP. Residue 68–71 (DARE) participates in GTP binding.

The protein belongs to the RapZ-like family.

In terms of biological role, displays ATPase and GTPase activities. This Anaeromyxobacter dehalogenans (strain 2CP-C) protein is Nucleotide-binding protein Adeh_0147.